The chain runs to 391 residues: Acetyl-CoA acetyltransferase (391 aa).

Cysteine 88 serves as the catalytic Acyl-thioester intermediate. Residues histidine 347 and cysteine 377 each act as proton acceptor in the active site.

It belongs to the thiolase-like superfamily. Thiolase family. Homotetramer.

It is found in the cytoplasm. It carries out the reaction 2 acetyl-CoA = acetoacetyl-CoA + CoA. It functions in the pathway metabolic intermediate biosynthesis; (R)-mevalonate biosynthesis; (R)-mevalonate from acetyl-CoA: step 1/3. This Paracoccus denitrificans protein is Acetyl-CoA acetyltransferase (phaA).